A 299-amino-acid polypeptide reads, in one-letter code: MSDPNLNASHDSVESVEDELDIVEAADAVDPDEAELADAEAGAPAEEAALHVESDEDEDEADVEVDAAVEEAADDAEVAEEEAEEAAPVEPAEPVDPIQALREELRLLPGEWYVIHTYAGYEKRVKANLEQRAVSLNVEEFIYQAEVPEEEIVQIKNGERKNVRQNKLPGYVLVRMDLTNESWGVVRNTPGVTGFVGNAYDPYPLTLDEIVKMLAPEAQEKAAKAAAEEAGLPAPAVKRTIEVLDFEVGDSVTVTDGPFATLQATINEINPDSKKVKGLVEIFGRETPVELSFDQIQKN.

The interval 30-96 is disordered; it reads DPDEAELADA…APVEPAEPVD (67 aa). A run of 2 repeats spans residues 46 to 49 and 70 to 73. The 4 X 4 AA repeats of E-E-A-A stretch occupies residues 46 to 87; sequence EEAALHVESDEDEDEADVEVDAAVEEAADDAEVAEEEAEEAA. Over residues 54–87 the composition is skewed to acidic residues; it reads SDEDEDEADVEVDAAVEEAADDAEVAEEEAEEAA. The 3; approximate repeat unit spans residues 80–83; it reads EEEA. The stretch at 84–87 is repeat 4; that stretch reads EEAA. Residues 248–276 form the KOW domain; the sequence is VGDSVTVTDGPFATLQATINEINPDSKKV.

This sequence belongs to the NusG family. Post-translationally, the N-terminus is blocked.

Its function is as follows. Participates in transcription elongation, termination and antitermination. The sequence is that of Transcription termination/antitermination protein NusG from Streptomyces virginiae (Streptomyces cinnamonensis).